The chain runs to 173 residues: T-cell surface glycoprotein CD3 gamma chain (173 aa).

A signal peptide spans 1-22; sequence MEQGKHLAGLILAVFLLQGTMA. Over 23 to 111 the chain is Extracellular; the sequence is HVKEVKVDDN…NCIELNPSTV (89 aa). The region spanning 24–94 is the Ig-like domain; that stretch reads VKEVKVDDNR…GSNNQSKSLQ (71 aa). The cysteines at positions 42 and 83 are disulfide-linked. 2 N-linked (GlcNAc...) asparagine glycosylation sites follow: Asn-45 and Asn-88. A helical membrane pass occupies residues 112–132; it reads AGFIFTEIVSIFLLAVGVYFI. The Cytoplasmic portion of the chain corresponds to 133–173; it reads AGQEGVRQSRASDKQTLLNNDQLYQPLKEREDDQYSHLRKN. Phosphoserine is present on Ser-141. At Ser-144 the chain carries Phosphoserine; by PKC. Residues 145 to 173 form the ITAM domain; that stretch reads DKQTLLNNDQLYQPLKEREDDQYSHLRKN. Positions 149-150 match the Di-leucine motif motif; sequence LL.

The TCR-CD3 complex is composed of a CD3D/CD3E and a CD3G/CD3E heterodimers that preferentially associate with TCRalpha and TCRbeta, respectively, to form TCRalpha/CD3E/CD3G and TCRbeta/CD3G/CD3E trimers. In turn, the hexamer interacts with CD3Z homodimer to form the TCR-CD3 complex. Alternatively, TCRalpha and TCRbeta can be replaced by TCRgamma and TCRdelta. Post-translationally, phosphorylated on Tyr residues after T-cell receptor triggering by LCK in association with CD4/CD8. Phosphorylated also by PKC; leading to the TCR complex down-regulation. Phosphorylated on Tyr residues after T-cell receptor triggering by LCK in association with CD4/CD8.

The protein resides in the cell membrane. Part of the TCR-CD3 complex present on T-lymphocyte cell surface that plays an essential role in adaptive immune response. When antigen presenting cells (APCs) activate T-cell receptor (TCR), TCR-mediated signals are transmitted across the cell membrane by the CD3 chains CD3D, CD3E, CD3G and CD3Z. All CD3 chains contain immunoreceptor tyrosine-based activation motifs (ITAMs) in their cytoplasmic domain. Upon TCR engagement, these motifs become phosphorylated by Src family protein tyrosine kinases LCK and FYN, resulting in the activation of downstream signaling pathways. In addition to this role of signal transduction in T-cell activation, CD3G plays an essential role in the dynamic regulation of TCR expression at the cell surface. Indeed, constitutive TCR cycling is dependent on the di-leucine-based (diL) receptor-sorting motif present in CD3G. The polypeptide is T-cell surface glycoprotein CD3 gamma chain (CD3G) (Bos taurus (Bovine)).